The sequence spans 517 residues: GMP synthase [glutamine-hydrolyzing] (517 aa).

A Glutamine amidotransferase type-1 domain is found at 9–199; it reads RILILDFGSQ…VLGVCGCERL (191 aa). Cysteine 86 functions as the Nucleophile in the catalytic mechanism. Active-site residues include histidine 173 and glutamate 175. Positions 200–392 constitute a GMPS ATP-PPase domain; the sequence is WTSESIIEDA…LGLPYNMLYR (193 aa). Residue 227–233 participates in ATP binding; the sequence is SGGVDSS.

In terms of assembly, homodimer.

The catalysed reaction is XMP + L-glutamine + ATP + H2O = GMP + L-glutamate + AMP + diphosphate + 2 H(+). It functions in the pathway purine metabolism; GMP biosynthesis; GMP from XMP (L-Gln route): step 1/1. Its function is as follows. Catalyzes the synthesis of GMP from XMP. The protein is GMP synthase [glutamine-hydrolyzing] of Vibrio campbellii (strain ATCC BAA-1116).